Here is a 644-residue protein sequence, read N- to C-terminus: Exoribonuclease 2 (644 aa).

The RNB domain maps to 189 to 516 (RQDLTALNFV…NHRLLKAVIK (328 aa)). One can recognise an S1 motif domain in the interval 561–643 (NTRFAAEIID…ETRSIIARPA (83 aa)).

This sequence belongs to the RNR ribonuclease family. RNase II subfamily.

The protein resides in the cytoplasm. It catalyses the reaction Exonucleolytic cleavage in the 3'- to 5'-direction to yield nucleoside 5'-phosphates.. Functionally, involved in mRNA degradation. Hydrolyzes single-stranded polyribonucleotides processively in the 3' to 5' direction. The sequence is that of Exoribonuclease 2 from Salmonella dublin (strain CT_02021853).